The primary structure comprises 113 residues: Dynein light chain Tctex-type 1 (113 aa).

N-acetylmethionine is present on methionine 1. The interval 41 to 113 (QWTTNVVEQT…CIVSAFGLSI (73 aa)) is interaction with GNB1.

This sequence belongs to the dynein light chain Tctex-type family. As to quaternary structure, homodimer. The cytoplasmic dynein 1 complex consists of two catalytic heavy chains (HCs) and a number of non-catalytic subunits presented by intermediate chains (ICs), light intermediate chains (LICs) and light chains (LCs); the composition seems to vary in respect to the IC, LIC and LC composition. The heavy chain homodimer serves as a scaffold for the probable homodimeric assembly of the non-catalytic subunits. The ICs and LICs bind directly to the HC dimer and the LCs assemble on the IC dimer. DYNLT1 and DYNLT3 compete for association with dynein IC (DYNC1I1 or DYNC1I2). Self-associates. Interacts with RHO. Interacts with DYNC1I1 and DYNC1I2. Interacts with DOC2A, DOC2B and SCN10A. Interacts with PVR. Interacts with SVIL isoform 2. Interacts with GNB1; the interaction occurs in presence of guanine nucleotide-binding protein G(T) subunit gamma; the interaction diminishes the association of DYNLT1 with dynein IC (DYNC1I1 or DYNC1I2). Interacts with GNB2, GNB3 and GNB5; the interactions occur in presence of guanine nucleotide-binding protein G(T) subunit gamma. Interacts with ACVR2B and ARHGEF2. Interacts with DNAI4. Interacts with CFAP61. In terms of processing, phosphorylated by BMPR2. The phosphorylation status is proposed to regulate the association with the cytoplasmic dynein complex and may have role in cytoplasmic dynein cargo release.

It localises to the golgi apparatus. The protein resides in the cytoplasm. The protein localises to the cytoskeleton. It is found in the spindle. Functionally, acts as one of several non-catalytic accessory components of the cytoplasmic dynein 1 complex that are thought to be involved in linking dynein to cargos and to adapter proteins that regulate dynein function. Cytoplasmic dynein 1 acts as a motor for the intracellular retrograde motility of vesicles and organelles along microtubules. Binds to transport cargos and is involved in apical cargo transport such as rhodopsin-bearing vesicles in polarized epithelia. May also be a accessory component of axonemal dynein. Plays a role in neuronal morphogenesis; the function is independent of cytoplasmic dynein and seems to be coupled to regulation of the actin cytoskeleton by enhancing Rac1 activity. The function in neurogenesis may be regulated by association with a G-protein beta-gamma dimer. May function as a receptor-independent activator of heterotrimeric G-protein signaling; the activation appears to be independent of a nucleotide exchange. Plays a role in regulating neurogenesis; inhibits the genesis of neurons from precursor cells during cortical development presumably by antagonizing ARHGEF2. Involved in the regulation of mitotic spindle orientation. Unrelated to the role in retrograde microtubule-associated movement may play a role in the dimerization of cytoplasmic proteins/domains such as for ACVR2B. Binds to the cytoplasmic domain of ACVR2B and, in vitro, inhibits ACVR2B signaling. In Bos taurus (Bovine), this protein is Dynein light chain Tctex-type 1 (DYNLT1).